Here is a 312-residue protein sequence, read N- to C-terminus: Glyoxylate/hydroxypyruvate reductase A (312 aa).

Arg227 is a catalytic residue. The Proton donor role is filled by His275.

It belongs to the D-isomer specific 2-hydroxyacid dehydrogenase family. GhrA subfamily.

The protein localises to the cytoplasm. It catalyses the reaction glycolate + NADP(+) = glyoxylate + NADPH + H(+). It carries out the reaction (R)-glycerate + NAD(+) = 3-hydroxypyruvate + NADH + H(+). The catalysed reaction is (R)-glycerate + NADP(+) = 3-hydroxypyruvate + NADPH + H(+). In terms of biological role, catalyzes the NADPH-dependent reduction of glyoxylate and hydroxypyruvate into glycolate and glycerate, respectively. The sequence is that of Glyoxylate/hydroxypyruvate reductase A from Escherichia coli O157:H7.